A 424-amino-acid chain; its full sequence is Histidine--tRNA ligase (424 aa).

The protein belongs to the class-II aminoacyl-tRNA synthetase family. As to quaternary structure, homodimer.

It localises to the cytoplasm. It catalyses the reaction tRNA(His) + L-histidine + ATP = L-histidyl-tRNA(His) + AMP + diphosphate + H(+). This is Histidine--tRNA ligase from Escherichia coli (strain SE11).